A 156-amino-acid chain; its full sequence is Small ribosomal subunit protein uS7 (156 aa).

Belongs to the universal ribosomal protein uS7 family. As to quaternary structure, part of the 30S ribosomal subunit. Contacts proteins S9 and S11.

In terms of biological role, one of the primary rRNA binding proteins, it binds directly to 16S rRNA where it nucleates assembly of the head domain of the 30S subunit. Is located at the subunit interface close to the decoding center, probably blocks exit of the E-site tRNA. The polypeptide is Small ribosomal subunit protein uS7 (Afipia carboxidovorans (strain ATCC 49405 / DSM 1227 / KCTC 32145 / OM5) (Oligotropha carboxidovorans)).